The primary structure comprises 660 residues: Translation factor GUF1, mitochondrial (660 aa).

Residues 1-42 constitute a mitochondrion transit peptide; it reads MRSCVRTASSVLQSWRAHTVLRNGCPLPSRTLERLPRLARSY. The tr-type G domain occupies 62–242; that stretch reads ERYRNFCIVA…AVVEKIPAPV (181 aa). Residues 71 to 78, 135 to 139, and 189 to 192 contribute to the GTP site; these read AHVDHGKS, DTPGH, and NKVD.

It belongs to the TRAFAC class translation factor GTPase superfamily. Classic translation factor GTPase family. LepA subfamily.

The protein localises to the mitochondrion inner membrane. The enzyme catalyses GTP + H2O = GDP + phosphate + H(+). In terms of biological role, promotes mitochondrial protein synthesis. May act as a fidelity factor of the translation reaction, by catalyzing a one-codon backward translocation of tRNAs on improperly translocated ribosomes. Binds to mitochondrial ribosomes in a GTP-dependent manner. This Phaeosphaeria nodorum (strain SN15 / ATCC MYA-4574 / FGSC 10173) (Glume blotch fungus) protein is Translation factor GUF1, mitochondrial.